A 567-amino-acid chain; its full sequence is Hexose transporter HXT11 (567 aa).

The span at 1–22 shows a compositional bias: polar residues; it reads MSGVNNTSANELSTTMSNSNSA. The disordered stretch occupies residues 1–45; the sequence is MSGVNNTSANELSTTMSNSNSAVGAPSVKTEHGDSKNSLNLDANE. Residues 1–56 lie on the Cytoplasmic side of the membrane; sequence MSGVNNTSANELSTTMSNSNSAVGAPSVKTEHGDSKNSLNLDANEPPIDLPQKPLS. Residues 57–77 traverse the membrane as a helical segment; it reads AYTTVAILCLMIAFGGFIFGW. The Extracellular portion of the chain corresponds to 78–112; the sequence is DTGTISGFVNLSDFIRRFGQKNDKGTYYLSKVRMG. N87 carries an N-linked (GlcNAc...) asparagine glycan. The chain crosses the membrane as a helical span at residues 113–133; that stretch reads LIVSIFNIGCAIGGIVLSKVG. Over 134 to 139 the chain is Cytoplasmic; that stretch reads DIYGRR. The chain crosses the membrane as a helical span at residues 140–160; sequence IGLITVTAIYVVGILIQITSI. Residues 161-170 are Extracellular-facing; sequence NKWYQYFIGR. Residues 171–191 traverse the membrane as a helical segment; sequence IISGLGVGGIAVLSPMLISEV. Residues 192–197 lie on the Cytoplasmic side of the membrane; it reads APKHIR. The helical transmembrane segment at 198–218 threads the bilayer; the sequence is GTLVQLYQLMGTMGIFLGYCT. At 219 to 232 the chain is on the extracellular side; it reads NYGTKNYHNATQWR. N-linked (GlcNAc...) asparagine glycosylation occurs at N227. A helical transmembrane segment spans residues 233–253; the sequence is VGLGLCFAWATFMVSGMMFVP. Topologically, residues 254–336 are cytoplasmic; that stretch reads ESPRYLIEVG…IQSLQQLTGD (83 aa). A helical transmembrane segment spans residues 337-353; it reads NYFFYYGTTIFKSVGLK. Topologically, residues 354–359 are extracellular; it reads DSFQTS. The chain crosses the membrane as a helical span at residues 360-377; that stretch reads IIIGVVNFFSSFIAVYTI. Residues 378–384 lie on the Cytoplasmic side of the membrane; sequence ERFGRRT. A helical membrane pass occupies residues 385–405; the sequence is CLLWGAASMLCCFAVFASVGV. Over 406–429 the chain is Extracellular; sequence TKLWPQGSSHQDITSQGAGNCMIV. The helical transmembrane segment at 430–450 threads the bilayer; the sequence is FTMFFIFSFATTWAGGCYVIV. Residues 451 to 467 lie on the Cytoplasmic side of the membrane; the sequence is SETFPLRVKSRGMAIAT. The chain crosses the membrane as a helical span at residues 468-488; sequence AANWMWGFLISFFTPFITGAI. Position 489 (N489) is a topological domain, extracellular. Residues 490 to 510 traverse the membrane as a helical segment; sequence FYYGYVFLGCLVFAYFYVFFF. The Cytoplasmic segment spans residues 511-567; sequence VPETKGLTLEEVNTMWLEGVPAWKSASWVPPERRTADYDADAIDHDNRPIYKRFFSS.

It belongs to the major facilitator superfamily. Sugar transporter (TC 2.A.1.1) family.

It localises to the membrane. In terms of biological role, probable glucose transporter. This is Hexose transporter HXT11 (HXT11) from Saccharomyces cerevisiae (strain ATCC 204508 / S288c) (Baker's yeast).